The primary structure comprises 397 residues: Probable peptidoglycan glycosyltransferase FtsW (397 aa).

Residues 1 to 30 lie on the Cytoplasmic side of the membrane; sequence MYGLEMLEKIKLEYDKWACLTPKNSLYDRT. The helical transmembrane segment at 31-51 threads the bilayer; sequence LVWLFLSLLMIGFIMVTSASI. The Periplasmic portion of the chain corresponds to 52 to 61; sequence PVSTRLNNDP. A helical membrane pass occupies residues 62-82; sequence FHFAIRDSIYLACSLLAFAFV. Topologically, residues 83-94 are cytoplasmic; sequence VKIPMRNWEKYN. A helical membrane pass occupies residues 95 to 115; sequence VPLFLLSLLFLASVLIFGRSV. Over 116-126 the chain is Periplasmic; that stretch reads NGSIRWIQLGP. Residues 127–146 traverse the membrane as a helical segment; sequence INFQPAELSKLAIICYFSSF. The Cytoplasmic portion of the chain corresponds to 147–158; sequence YVRKYDEMRNRS. The next 2 helical transmembrane spans lie at 159–179 and 180–200; these read ASVIRPMVILFLFSSLLLLQP and DLGSVVVLFVLTFTMLFIMGA. A topological domain (cytoplasmic) is located at residue lysine 201. A helical membrane pass occupies residues 202–222; sequence VMQFLLLIVTASVSFILLVLT. At 223–280 the chain is on the periplasmic side; sequence SEYRLKRVTSFLDPFADAYGDGFQLSNAQMAFGQGQLWGQGLGNSVQKLEYLPEAHTD. A helical transmembrane segment spans residues 281 to 301; sequence FVMAVVAEEFGFIGIIFMVVL. Over 302–325 the chain is Cytoplasmic; that stretch reads LLCLSFRAIKISRDALKLEARFRG. The chain crosses the membrane as a helical span at residues 326–346; that stretch reads FFAFGVAIWVFLQGSVNLGVA. The Periplasmic portion of the chain corresponds to 347–356; that stretch reads SGALPTKGLT. A helical transmembrane segment spans residues 357 to 377; the sequence is FPLVSYGGSSLVIMSVAIAIL. The Cytoplasmic portion of the chain corresponds to 378-397; sequence LRIDYENRLTRVGHAQIKEP.

This sequence belongs to the SEDS family. FtsW subfamily.

The protein resides in the cell inner membrane. The enzyme catalyses [GlcNAc-(1-&gt;4)-Mur2Ac(oyl-L-Ala-gamma-D-Glu-L-Lys-D-Ala-D-Ala)](n)-di-trans,octa-cis-undecaprenyl diphosphate + beta-D-GlcNAc-(1-&gt;4)-Mur2Ac(oyl-L-Ala-gamma-D-Glu-L-Lys-D-Ala-D-Ala)-di-trans,octa-cis-undecaprenyl diphosphate = [GlcNAc-(1-&gt;4)-Mur2Ac(oyl-L-Ala-gamma-D-Glu-L-Lys-D-Ala-D-Ala)](n+1)-di-trans,octa-cis-undecaprenyl diphosphate + di-trans,octa-cis-undecaprenyl diphosphate + H(+). It participates in cell wall biogenesis; peptidoglycan biosynthesis. Functionally, peptidoglycan polymerase that is essential for cell division. The sequence is that of Probable peptidoglycan glycosyltransferase FtsW from Haemophilus ducreyi (strain 35000HP / ATCC 700724).